Reading from the N-terminus, the 134-residue chain is Insulin-like peptide 4 (134 aa).

Residues 1–26 (MSLIRLGLALLLLLATVSQLLQPVQG) form the signal peptide. 3 cysteine pairs are disulfide-bonded: C31-C120, C43-C133, and C119-C124. Residues 54–108 (SSASKDARVRDLIRKLQQPDEDIEQETETGRLKQKHTDADTEKGVPPAVGSGRKL) constitute a propeptide, connecting peptide. The tract at residues 72-107 (PDEDIEQETETGRLKQKHTDADTEKGVPPAVGSGRK) is disordered. Basic and acidic residues predominate over residues 81-96 (ETGRLKQKHTDADTEK).

This sequence belongs to the insulin family. As to quaternary structure, heterodimer of a B chain and an A chain linked by two disulfide bonds. As to expression, expressed at a high level in the embryonic mesoderm, with expression continuing after gastrulation and reducing from stage 12 onwards. Highly expressed in the embryonic anterior midgut rudiment and larval midgut.

Its subcellular location is the secreted. In terms of biological role, possible ligand of InR/insulin-like receptor. The chain is Insulin-like peptide 4 from Drosophila melanogaster (Fruit fly).